A 170-amino-acid polypeptide reads, in one-letter code: Adenine phosphoribosyltransferase (170 aa).

The protein belongs to the purine/pyrimidine phosphoribosyltransferase family. As to quaternary structure, homodimer.

Its subcellular location is the cytoplasm. The catalysed reaction is AMP + diphosphate = 5-phospho-alpha-D-ribose 1-diphosphate + adenine. It functions in the pathway purine metabolism; AMP biosynthesis via salvage pathway; AMP from adenine: step 1/1. Functionally, catalyzes a salvage reaction resulting in the formation of AMP, that is energically less costly than de novo synthesis. This chain is Adenine phosphoribosyltransferase, found in Halothermothrix orenii (strain H 168 / OCM 544 / DSM 9562).